Consider the following 207-residue polypeptide: Protein GrpE (207 aa).

A disordered region spans residues 1 to 33 (MTDPNGPKDIPEQSAEAAEPVVSKPYIMPDDPE).

This sequence belongs to the GrpE family. In terms of assembly, homodimer.

Its subcellular location is the cytoplasm. Its function is as follows. Participates actively in the response to hyperosmotic and heat shock by preventing the aggregation of stress-denatured proteins, in association with DnaK and GrpE. It is the nucleotide exchange factor for DnaK and may function as a thermosensor. Unfolded proteins bind initially to DnaJ; upon interaction with the DnaJ-bound protein, DnaK hydrolyzes its bound ATP, resulting in the formation of a stable complex. GrpE releases ADP from DnaK; ATP binding to DnaK triggers the release of the substrate protein, thus completing the reaction cycle. Several rounds of ATP-dependent interactions between DnaJ, DnaK and GrpE are required for fully efficient folding. The sequence is that of Protein GrpE from Rhodopseudomonas palustris (strain BisA53).